Here is a 444-residue protein sequence, read N- to C-terminus: MERKVSFELDALWQERHDDEHKIRRDDHRSPYQRDRARILHSAAFRRLQAKTQVHGNSLEDFHRTRLTHSLEAAQLGTGIVAQLKKKQPEFRDLLPSDSLIDSLCLAHDIGHPPYGHGGEVALNYMMREHGGFEGNAQTFRIVTKLEPYTEHFGMNLSRRALLGLIKYPALLSQTRAVCLPKPVEHQRKLKAKDWSPAKGIYDCDKDLFDWVIAPLTDNDKALLSQMRCRPESDFEHCKTRFKSLDCSIMELADDIAYGVHDLEDAIVLGMVTRQQWQEGAASQLADCGDAWFEEHIGSIGQMLFSGKHHERKDAIGGMVNALLTSISIKVVDEPFSNPLLAWNACLEPQMAKALEVLKHFVSKYVIQVHQVQIVEYKGQQIIMDLFEALSADPERLLPTHTQALWQEVANESAKMRVIADYISAMTDGHAQKLHRQLFSSIVL.

In terms of domain architecture, HD spans 66–259; sequence RLTHSLEAAQ…MELADDIAYG (194 aa).

It belongs to the dGTPase family. Type 2 subfamily.

The chain is Deoxyguanosinetriphosphate triphosphohydrolase-like protein from Vibrio campbellii (strain ATCC BAA-1116).